Consider the following 323-residue polypeptide: Beta-ketoacyl-[acyl-carrier-protein] synthase III (323 aa).

Residues Cys-113 and His-250 contribute to the active site. The segment at 251–255 is ACP-binding; sequence QANRR. The active site involves Asn-280.

The protein belongs to the thiolase-like superfamily. FabH family. As to quaternary structure, homodimer.

It is found in the cytoplasm. The catalysed reaction is malonyl-[ACP] + acetyl-CoA + H(+) = 3-oxobutanoyl-[ACP] + CO2 + CoA. The protein operates within lipid metabolism; fatty acid biosynthesis. Its function is as follows. Catalyzes the condensation reaction of fatty acid synthesis by the addition to an acyl acceptor of two carbons from malonyl-ACP. Catalyzes the first condensation reaction which initiates fatty acid synthesis and may therefore play a role in governing the total rate of fatty acid production. Possesses both acetoacetyl-ACP synthase and acetyl transacylase activities. Its substrate specificity determines the biosynthesis of branched-chain and/or straight-chain of fatty acids. The protein is Beta-ketoacyl-[acyl-carrier-protein] synthase III of Rhizobium johnstonii (strain DSM 114642 / LMG 32736 / 3841) (Rhizobium leguminosarum bv. viciae).